A 130-amino-acid polypeptide reads, in one-letter code: Small ribosomal subunit protein uS9 (130 aa).

The protein belongs to the universal ribosomal protein uS9 family.

The chain is Small ribosomal subunit protein uS9 from Geotalea daltonii (strain DSM 22248 / JCM 15807 / FRC-32) (Geobacter daltonii).